Consider the following 205-residue polypeptide: NADH-quinone oxidoreductase subunit C (205 aa).

This sequence belongs to the complex I 30 kDa subunit family. As to quaternary structure, NDH-1 is composed of 14 different subunits. Subunits NuoB, C, D, E, F, and G constitute the peripheral sector of the complex.

It is found in the cell inner membrane. It catalyses the reaction a quinone + NADH + 5 H(+)(in) = a quinol + NAD(+) + 4 H(+)(out). Its function is as follows. NDH-1 shuttles electrons from NADH, via FMN and iron-sulfur (Fe-S) centers, to quinones in the respiratory chain. The immediate electron acceptor for the enzyme in this species is believed to be ubiquinone. Couples the redox reaction to proton translocation (for every two electrons transferred, four hydrogen ions are translocated across the cytoplasmic membrane), and thus conserves the redox energy in a proton gradient. This is NADH-quinone oxidoreductase subunit C from Nitrosospira multiformis (strain ATCC 25196 / NCIMB 11849 / C 71).